The sequence spans 138 residues: DNA-directed RNA polymerase II subunit 4 (138 aa).

The residue at position 2 (Ser-2) is an N-acetylserine.

It belongs to the eukaryotic RPB4 RNA polymerase subunit family. As to quaternary structure, component of the RNA polymerase II complex consisting of at least 12 subunits. Interacts with NRPB7.

It is found in the nucleus. Its function is as follows. DNA-dependent RNA polymerase catalyzes the transcription of DNA into RNA using the four ribonucleoside triphosphates as substrates. Second largest component of RNA polymerase II which synthesizes mRNA precursors and many functional non-coding RNAs. Proposed to contribute to the polymerase catalytic activity and forms the polymerase active center together with the largest subunit. Pol II is the central component of the basal RNA polymerase II transcription machinery. It is composed of mobile elements that move relative to each other. The chain is DNA-directed RNA polymerase II subunit 4 (NRPB4) from Arabidopsis thaliana (Mouse-ear cress).